The chain runs to 243 residues: Phosphatidylserine decarboxylase proenzyme (243 aa).

The Schiff-base intermediate with substrate; via pyruvic acid role is filled by Ser-212. The residue at position 212 (Ser-212) is a Pyruvic acid (Ser); by autocatalysis.

Belongs to the phosphatidylserine decarboxylase family. PSD-A subfamily. In terms of assembly, heterodimer of a large membrane-associated beta subunit and a small pyruvoyl-containing alpha subunit. Pyruvate is required as a cofactor. Is synthesized initially as an inactive proenzyme. Formation of the active enzyme involves a self-maturation process in which the active site pyruvoyl group is generated from an internal serine residue via an autocatalytic post-translational modification. Two non-identical subunits are generated from the proenzyme in this reaction, and the pyruvate is formed at the N-terminus of the alpha chain, which is derived from the carboxyl end of the proenzyme. The post-translation cleavage follows an unusual pathway, termed non-hydrolytic serinolysis, in which the side chain hydroxyl group of the serine supplies its oxygen atom to form the C-terminus of the beta chain, while the remainder of the serine residue undergoes an oxidative deamination to produce ammonia and the pyruvoyl prosthetic group on the alpha chain.

The protein resides in the cell membrane. The enzyme catalyses a 1,2-diacyl-sn-glycero-3-phospho-L-serine + H(+) = a 1,2-diacyl-sn-glycero-3-phosphoethanolamine + CO2. It participates in phospholipid metabolism; phosphatidylethanolamine biosynthesis; phosphatidylethanolamine from CDP-diacylglycerol: step 2/2. In terms of biological role, catalyzes the formation of phosphatidylethanolamine (PtdEtn) from phosphatidylserine (PtdSer). This is Phosphatidylserine decarboxylase proenzyme from Mycobacterium leprae (strain Br4923).